A 338-amino-acid polypeptide reads, in one-letter code: Ferredoxin--NADP reductase (338 aa).

The FAD site is built by aspartate 35, glutamine 43, tyrosine 48, alanine 88, phenylalanine 122, aspartate 289, and threonine 330.

It belongs to the ferredoxin--NADP reductase type 2 family. Homodimer. It depends on FAD as a cofactor.

It catalyses the reaction 2 reduced [2Fe-2S]-[ferredoxin] + NADP(+) + H(+) = 2 oxidized [2Fe-2S]-[ferredoxin] + NADPH. The protein is Ferredoxin--NADP reductase of Ehrlichia canis (strain Jake).